The chain runs to 275 residues: MANIKAKKYYSYAKINLFLHILNKRTDGYHNLQTWFTFLDLKDQLIFSFNNSREINISSNISIAAKQDNLVYKAIKKFQQSYRVQDIGVDIEIKKNIPMGAGLGGGSSNAATTLIALRDYYLPQLSNEEMIPLAAKLGADVPIFVYGKSAWAEGIGEILYHKDFSPQYALLIKPDIHISTKEFFVSEDLIKSSVLISKDLGFDKSIMHNDFENVFYAKYPEFSQYLKELDSDFRMTGTGSCFYLLSADKNKLEQLARKINKPLDKWLVKTLNYVY.

Residue K14 is part of the active site. Residue P98–S108 participates in ATP binding. The active site involves D140.

Belongs to the GHMP kinase family. IspE subfamily.

The enzyme catalyses 4-CDP-2-C-methyl-D-erythritol + ATP = 4-CDP-2-C-methyl-D-erythritol 2-phosphate + ADP + H(+). The protein operates within isoprenoid biosynthesis; isopentenyl diphosphate biosynthesis via DXP pathway; isopentenyl diphosphate from 1-deoxy-D-xylulose 5-phosphate: step 3/6. Functionally, catalyzes the phosphorylation of the position 2 hydroxy group of 4-diphosphocytidyl-2C-methyl-D-erythritol. This Francisella tularensis subsp. novicida (strain U112) protein is 4-diphosphocytidyl-2-C-methyl-D-erythritol kinase.